A 138-amino-acid polypeptide reads, in one-letter code: MLKEFQEFALKGNMVDLAIGVIIGGAFGGLVNSIVNDIIMPIIGLITGGIDFSNMFIQLAGDPKTTLAAAREAGATIAYGNFITLLINFMIIAWVLFLVVKLMNRLKKREEAKPAPAAPSEEVLLTEIRDILAKQQKA.

The next 3 membrane-spanning stretches (helical) occupy residues 15 to 35, 38 to 58, and 80 to 100; these read VDLAIGVIIGGAFGGLVNSIV, IIMPIIGLITGGIDFSNMFIQ, and GNFITLLINFMIIAWVLFLVV.

The protein belongs to the MscL family. In terms of assembly, homopentamer.

The protein localises to the cell inner membrane. Channel that opens in response to stretch forces in the membrane lipid bilayer. May participate in the regulation of osmotic pressure changes within the cell. The chain is Large-conductance mechanosensitive channel from Brucella ovis (strain ATCC 25840 / 63/290 / NCTC 10512).